The following is a 161-amino-acid chain: Nucleoside diphosphate kinase (161 aa).

ATP is bound by residues Lys12, Phe60, Arg88, Thr94, and Arg105. His121 (pros-phosphohistidine intermediate) is an active-site residue.

It belongs to the NDK family. Mg(2+) is required as a cofactor.

Its subcellular location is the cytoplasm. The catalysed reaction is a 2'-deoxyribonucleoside 5'-diphosphate + ATP = a 2'-deoxyribonucleoside 5'-triphosphate + ADP. It carries out the reaction a ribonucleoside 5'-diphosphate + ATP = a ribonucleoside 5'-triphosphate + ADP. Major role in the synthesis of nucleoside triphosphates other than ATP. The ATP gamma phosphate is transferred to the NDP beta phosphate via a ping-pong mechanism, using a phosphorylated active-site intermediate. This is Nucleoside diphosphate kinase from Pyrococcus furiosus (strain ATCC 43587 / DSM 3638 / JCM 8422 / Vc1).